The sequence spans 207 residues: Protein-L-isoaspartate O-methyltransferase (207 aa).

Residue S56 is part of the active site.

It belongs to the methyltransferase superfamily. L-isoaspartyl/D-aspartyl protein methyltransferase family.

It localises to the cytoplasm. It carries out the reaction [protein]-L-isoaspartate + S-adenosyl-L-methionine = [protein]-L-isoaspartate alpha-methyl ester + S-adenosyl-L-homocysteine. Its function is as follows. Catalyzes the methyl esterification of L-isoaspartyl residues in peptides and proteins that result from spontaneous decomposition of normal L-aspartyl and L-asparaginyl residues. It plays a role in the repair and/or degradation of damaged proteins. This chain is Protein-L-isoaspartate O-methyltransferase, found in Pyrobaculum islandicum (strain DSM 4184 / JCM 9189 / GEO3).